Here is a 142-residue protein sequence, read N- to C-terminus: Hemoglobin subunit alpha-2 (142 aa).

One can recognise a Globin domain in the interval 2 to 142 (VLSAADKTNV…VSTVLTSKYR (141 aa)). H59 contacts O2. Residue H88 participates in heme b binding.

This sequence belongs to the globin family. As to quaternary structure, heterotetramer of two alpha chains and two beta chains. As to expression, red blood cells.

Functionally, involved in oxygen transport from the lung to the various peripheral tissues. In terms of biological role, hemopressin acts as an antagonist peptide of the cannabinoid receptor CNR1. Hemopressin-binding efficiently blocks cannabinoid receptor CNR1 and subsequent signaling. The sequence is that of Hemoglobin subunit alpha-2 (HBA2) from Equus quagga burchellii (Burchell's zebra).